The following is a 569-amino-acid chain: MAAVPPLRDRLSFLHRLPILLKGTSDDDIPCPGYLFEEIAKISHESLGSSQCLLEYLLNRLDSSSGHVKLKVLKILLYLCSHGSSSFMLILRRNSALIQEATAFAGPPDPLHGNSLYQKVRAAAQDLGSTLFSDALPQPPSQPPQILPPAGMGAQARPHSALQGFGYTKESSRTGSAGETFLSTIQRAAEVVVNAVRPGPDNPCTKGPLPHGDAYQPAVTPSASHTHPNPGNLLPAAIQGTRAVKHQPGQAGGGWDEMDSSPSSQNSSCTSNLSRASDSVSRSGSDSHSGASREPGDLAERAEGMAPNDCQQELNLVRTVTQGPRVFLSREETQHFIKECGLLNCEAVLELLLQQLVGTSECEQMRALCAIASFGSADLLPQEHILLLCRQQLQELGAGSPGPVTNKATKILRHLEASCGQQFPTLRPCAQPNSAAAVVGPADLLTSPVPPPGSQVFLQPLSSTAVVPRSPVPTPSPDTLPPALQDPGELRTQLVCSSEPGTGSEQRLENTDTPKDSSSPCPWSPNSLFAGMELVACTRLPCPSFQADLQKVTTEPPVSEPSAFAFLNM.

Residues 8–141 (RDRLSFLHRL…FSDALPQPPS (134 aa)) form the ENTH domain. Residues 196–298 (VRPGPDNPCT…SGASREPGDL (103 aa)) form a disordered region. The span at 219-229 (VTPSASHTHPN) shows a compositional bias: polar residues. Positions 260 to 292 (SSPSSQNSSCTSNLSRASDSVSRSGSDSHSGAS) are enriched in low complexity. Ser400 bears the Phosphoserine mark. A disordered region spans residues 467 to 524 (VPRSPVPTPSPDTLPPALQDPGELRTQLVCSSEPGTGSEQRLENTDTPKDSSSPCPWS). Positions 470–480 (SPVPTPSPDTL) are enriched in pro residues. Over residues 494–505 (LVCSSEPGTGSE) the composition is skewed to polar residues. The segment covering 506 to 515 (QRLENTDTPK) has biased composition (basic and acidic residues). The tract at residues 525–535 (PNSLFAGMELV) is interaction with AP4B1. Positions 559 to 569 (SEPSAFAFLNM) are interaction with AP4E1.

As to quaternary structure, interacts with AP4B1 and AP4E1; the interaction is direct and mediates the association of TEPSIN with the adapter-like complex 4 (AP-4), a heterotetramer composed of AP4B1, AP4E1, AP4M1 and AP4S1.

It is found in the golgi apparatus. It localises to the trans-Golgi network membrane. Its subcellular location is the cytoplasmic vesicle. The protein localises to the cytoplasm. The protein resides in the cytosol. Its function is as follows. Associates with the adapter-like complex 4 (AP-4) and may therefore play a role in vesicular trafficking of proteins at the trans-Golgi network. This Rattus norvegicus (Rat) protein is AP-4 complex accessory subunit Tepsin.